We begin with the raw amino-acid sequence, 305 residues long: Tyrosine recombinase XerC (305 aa).

A Core-binding (CB) domain is found at 1 to 93; the sequence is MVLDGFAAYF…AWRQYCAWLV (93 aa). In terms of domain architecture, Tyr recombinase spans 114-294; sequence RVPKALPQEW…DFDHIARLYD (181 aa). Active-site residues include Arg155, Lys179, His246, Arg249, and His272. The O-(3'-phospho-DNA)-tyrosine intermediate role is filled by Tyr281.

It belongs to the 'phage' integrase family. XerC subfamily. As to quaternary structure, forms a cyclic heterotetrameric complex composed of two molecules of XerC and two molecules of XerD.

The protein localises to the cytoplasm. Functionally, site-specific tyrosine recombinase, which acts by catalyzing the cutting and rejoining of the recombining DNA molecules. The XerC-XerD complex is essential to convert dimers of the bacterial chromosome into monomers to permit their segregation at cell division. It also contributes to the segregational stability of plasmids. This chain is Tyrosine recombinase XerC, found in Neisseria gonorrhoeae (strain ATCC 700825 / FA 1090).